We begin with the raw amino-acid sequence, 327 residues long: tRNA pseudouridine synthase B (327 aa).

The active-site Nucleophile is the aspartate 69. Substrate-binding residues include tyrosine 97, tyrosine 201, and leucine 222.

Belongs to the pseudouridine synthase TruB family. Type 1 subfamily.

It catalyses the reaction uridine(55) in tRNA = pseudouridine(55) in tRNA. Functionally, responsible for synthesis of pseudouridine from uracil-55 in the psi GC loop of transfer RNAs. This chain is tRNA pseudouridine synthase B, found in Wigglesworthia glossinidia brevipalpis.